A 318-amino-acid chain; its full sequence is Malate dehydrogenase (318 aa).

NAD(+)-binding positions include 10 to 15 and D34; that span reads GGGQIG. Substrate is bound by residues R83 and R89. Residues N96 and 119 to 121 contribute to the NAD(+) site; that span reads ISN. Substrate-binding residues include N121 and R152. H176 serves as the catalytic Proton acceptor.

The protein belongs to the LDH/MDH superfamily. MDH type 3 family.

The catalysed reaction is (S)-malate + NAD(+) = oxaloacetate + NADH + H(+). Catalyzes the reversible oxidation of malate to oxaloacetate. The sequence is that of Malate dehydrogenase from Geotalea daltonii (strain DSM 22248 / JCM 15807 / FRC-32) (Geobacter daltonii).